We begin with the raw amino-acid sequence, 397 residues long: tRNA-specific 2-thiouridylase MnmA (397 aa).

Residues 19 to 26 (AMSGGVDS) and Leu-45 each bind ATP. The active-site Nucleophile is Cys-113. Cys-113 and Cys-210 form a disulfide bridge. Residue Gly-137 participates in ATP binding. The interaction with tRNA stretch occupies residues 160-162 (RDQ). Cys-210 functions as the Cysteine persulfide intermediate in the catalytic mechanism.

This sequence belongs to the MnmA/TRMU family.

It is found in the cytoplasm. It carries out the reaction S-sulfanyl-L-cysteinyl-[protein] + uridine(34) in tRNA + AH2 + ATP = 2-thiouridine(34) in tRNA + L-cysteinyl-[protein] + A + AMP + diphosphate + H(+). In terms of biological role, catalyzes the 2-thiolation of uridine at the wobble position (U34) of tRNA, leading to the formation of s(2)U34. This chain is tRNA-specific 2-thiouridylase MnmA, found in Bradyrhizobium sp. (strain BTAi1 / ATCC BAA-1182).